A 155-amino-acid chain; its full sequence is Transcriptional regulator MraZ (155 aa).

2 SpoVT-AbrB domains span residues 7–63 (REQH…EPSV) and 92–135 (LDQT…EPLR).

The protein belongs to the MraZ family. In terms of assembly, forms oligomers.

It is found in the cytoplasm. The protein resides in the nucleoid. The polypeptide is Transcriptional regulator MraZ (Chlorobaculum tepidum (strain ATCC 49652 / DSM 12025 / NBRC 103806 / TLS) (Chlorobium tepidum)).